We begin with the raw amino-acid sequence, 340 residues long: Tartrate-resistant acid phosphatase type 5 (340 aa).

A signal peptide spans 1–20; it reads MDTWTVLLILQASLVLPGAV. Residues D41, D79, Y82, and N118 each contribute to the Fe cation site. Residues N124 and N155 are each glycosylated (N-linked (GlcNAc...) asparagine). C169 and C227 are joined by a disulfide. Residues H213, H248, and H250 each coordinate Fe cation.

It depends on Fe cation as a cofactor.

The protein resides in the secreted. The catalysed reaction is a phosphate monoester + H2O = an alcohol + phosphate. Uteroferrin is a phosphoprotein phosphatase, synthesized in response to progesterone. It appears to function in transplacental transport of iron in pig. The chain is Tartrate-resistant acid phosphatase type 5 (ACP5) from Sus scrofa (Pig).